The primary structure comprises 976 residues: Vacuolar membrane protease (976 aa).

Residues 1–15 (MKLKSVFRSVLKYRK) lie on the Cytoplasmic side of the membrane. Residues 16-36 (TNLSLLLLITYSIITLLYIFD) form a helical membrane-spanning segment. Residues 37–359 (HERYKLNLPK…KFFVISAKTL (323 aa)) are Vacuolar-facing. N-linked (GlcNAc...) asparagine glycosylation is found at Asn96 and Asn121. The Zn(2+) site is built by His156 and Asp168. N-linked (GlcNAc...) asparagine glycosylation occurs at Asn189. Glu200 functions as the Proton acceptor in the catalytic mechanism. Position 201 (Glu201) interacts with Zn(2+). Residue Asn217 is glycosylated (N-linked (GlcNAc...) asparagine). Positions 226 and 300 each coordinate Zn(2+). A helical transmembrane segment spans residues 360 to 380 (FYWNCIFLLVSPVVAIGLYLI). Residues 381–392 (SRDRMTWKSYSW) are Cytoplasmic-facing. The helical transmembrane segment at 393-412 (LSWTRFPLSLAAGIIVQKLF) threads the bilayer. At 413–428 (SNDIIRSNPLTFSRNY) the chain is on the vacuolar side. A helical membrane pass occupies residues 429–449 (FWPISAFFTQVIFTSYVLINC). Over 450–461 (SNFFFPCADMKS) the chain is Cytoplasmic. A helical membrane pass occupies residues 462-482 (LSIIELFIILWTILLFTSKLL). The Vacuolar portion of the chain corresponds to 483–496 (YSSDYRYTGLYPLS). A helical membrane pass occupies residues 497–517 (IFFLLSTIAAILRLLALALGM). The Cytoplasmic portion of the chain corresponds to 518–627 (RTRKRLGREC…NSLKLEYTDY (110 aa)). Residues 528 to 610 (RDHHSNYSSH…PLLKGSNSME (83 aa)) are disordered. Residues 549 to 558 (NLEQPQDQLT) are compositionally biased toward polar residues. Residues 559-570 (SSQDDQASIQDD) are compositionally biased toward low complexity. Basic and acidic residues predominate over residues 582-601 (NVDEDHGMDSSSQQHDERVP). The helical transmembrane segment at 628–648 (AWIIQFLLIVPIPSFILFNSV) threads the bilayer. Topologically, residues 649 to 668 (DVIMDALNHTVQEGSKATFD) are vacuolar. N-linked (GlcNAc...) asparagine glycosylation occurs at Asn656. The helical transmembrane segment at 669–689 (VLRFGMVGSILIALPILPFFY) threads the bilayer. At 690–692 (KVN) the chain is on the cytoplasmic side. A helical membrane pass occupies residues 693 to 713 (YITISLTALLFLISASKTLLV). At 714–976 (HPFTNSNPLK…LVIVKDAIIL (263 aa)) the chain is on the vacuolar side. N-linked (GlcNAc...) asparagine glycosylation is found at Asn768, Asn796, Asn811, Asn866, and Asn937.

It belongs to the peptidase M28 family. Requires Zn(2+) as cofactor. In terms of processing, N-glycosylated.

It is found in the vacuole membrane. In terms of biological role, may be involved in vacuolar sorting and osmoregulation. The sequence is that of Vacuolar membrane protease from Saccharomyces cerevisiae (strain ATCC 204508 / S288c) (Baker's yeast).